Consider the following 90-residue polypeptide: DNA-directed RNA polymerase subunit omega (90 aa).

The protein belongs to the RNA polymerase subunit omega family. As to quaternary structure, the RNAP catalytic core consists of 2 alpha, 1 beta, 1 beta' and 1 omega subunit. When a sigma factor is associated with the core the holoenzyme is formed, which can initiate transcription.

The catalysed reaction is RNA(n) + a ribonucleoside 5'-triphosphate = RNA(n+1) + diphosphate. Its function is as follows. Promotes RNA polymerase assembly. Latches the N- and C-terminal regions of the beta' subunit thereby facilitating its interaction with the beta and alpha subunits. This is DNA-directed RNA polymerase subunit omega from Streptomyces griseus subsp. griseus (strain JCM 4626 / CBS 651.72 / NBRC 13350 / KCC S-0626 / ISP 5235).